The primary structure comprises 160 residues: NADH-quinone oxidoreductase subunit B (160 aa).

Cys37, Cys38, Cys102, and Cys132 together coordinate [4Fe-4S] cluster.

It belongs to the complex I 20 kDa subunit family. NDH-1 is composed of 14 different subunits. Subunits NuoB, C, D, E, F, and G constitute the peripheral sector of the complex. [4Fe-4S] cluster serves as cofactor.

It is found in the cell inner membrane. It carries out the reaction a quinone + NADH + 5 H(+)(in) = a quinol + NAD(+) + 4 H(+)(out). In terms of biological role, NDH-1 shuttles electrons from NADH, via FMN and iron-sulfur (Fe-S) centers, to quinones in the respiratory chain. Couples the redox reaction to proton translocation (for every two electrons transferred, four hydrogen ions are translocated across the cytoplasmic membrane), and thus conserves the redox energy in a proton gradient. The chain is NADH-quinone oxidoreductase subunit B from Cupriavidus pinatubonensis (strain JMP 134 / LMG 1197) (Cupriavidus necator (strain JMP 134)).